We begin with the raw amino-acid sequence, 100 residues long: Large ribosomal subunit protein uL23 (100 aa).

It belongs to the universal ribosomal protein uL23 family. In terms of assembly, part of the 50S ribosomal subunit. Contacts protein L29, and trigger factor when it is bound to the ribosome.

Functionally, one of the early assembly proteins it binds 23S rRNA. One of the proteins that surrounds the polypeptide exit tunnel on the outside of the ribosome. Forms the main docking site for trigger factor binding to the ribosome. The chain is Large ribosomal subunit protein uL23 from Escherichia coli O157:H7.